The primary structure comprises 246 residues: MADS-box protein EJ2 (246 aa).

The MADS-box domain occupies 1–61 (MGRGRVELKR…GKLYEFCSTS (61 aa)). The 91-residue stretch at 87-177 (TQNNYHEYLR…RRKLEESVAG (91 aa)) folds into the K-box domain.

The protein localises to the nucleus. MADS-box transcription factor that acts redundantly with J2 to control meristem maturation and inflorescence architecture. The polypeptide is MADS-box protein EJ2 (Solanum lycopersicum (Tomato)).